A 439-amino-acid polypeptide reads, in one-letter code: uncharacterized protein (439 aa).

Residue 28–35 (GRRRIGKT) participates in ATP binding.

This is an uncharacterized protein from Methanocaldococcus jannaschii (strain ATCC 43067 / DSM 2661 / JAL-1 / JCM 10045 / NBRC 100440) (Methanococcus jannaschii).